Here is a 121-residue protein sequence, read N- to C-terminus: Large ribosomal subunit protein uL18 (121 aa).

Belongs to the universal ribosomal protein uL18 family. Part of the 50S ribosomal subunit; part of the 5S rRNA/L5/L18/L25 subcomplex. Contacts the 5S and 23S rRNAs.

Functionally, this is one of the proteins that bind and probably mediate the attachment of the 5S RNA into the large ribosomal subunit, where it forms part of the central protuberance. This chain is Large ribosomal subunit protein uL18, found in Spiroplasma kunkelii.